The chain runs to 298 residues: 1D-myo-inositol 2-acetamido-2-deoxy-alpha-D-glucopyranoside deacetylase (298 aa).

Zn(2+) is bound by residues His-14, Asp-17, and His-148. The segment at 277–298 is disordered; that stretch reads RGPAGPDGREHDLFAGLDGPAT.

The protein belongs to the MshB deacetylase family. Zn(2+) is required as a cofactor.

It catalyses the reaction 1D-myo-inositol 2-acetamido-2-deoxy-alpha-D-glucopyranoside + H2O = 1D-myo-inositol 2-amino-2-deoxy-alpha-D-glucopyranoside + acetate. Functionally, catalyzes the deacetylation of 1D-myo-inositol 2-acetamido-2-deoxy-alpha-D-glucopyranoside (GlcNAc-Ins) in the mycothiol biosynthesis pathway. In Nocardia farcinica (strain IFM 10152), this protein is 1D-myo-inositol 2-acetamido-2-deoxy-alpha-D-glucopyranoside deacetylase.